Here is a 423-residue protein sequence, read N- to C-terminus: Ferrochelatase, mitochondrial (423 aa).

A mitochondrion-targeting transit peptide spans 1-40 (MIRFCPSCFALKRTAPVLNHTSRLGNYFNNTFSKFSVNRM). Cys-200 is a binding site for [2Fe-2S] cluster. Residue Asp-385 is part of the active site. Residues Cys-405, Cys-408, and Cys-413 each contribute to the [2Fe-2S] cluster site.

This sequence belongs to the ferrochelatase family. In terms of assembly, monomer. It depends on [2Fe-2S] cluster as a cofactor.

The protein resides in the mitochondrion inner membrane. The protein localises to the cytoplasm. It localises to the nucleus. The catalysed reaction is heme b + 2 H(+) = protoporphyrin IX + Fe(2+). Its pathway is porphyrin-containing compound metabolism; protoheme biosynthesis; protoheme from protoporphyrin-IX: step 1/1. Its function is as follows. Catalyzes the ferrous insertion into protoporphyrin IX. The polypeptide is Ferrochelatase, mitochondrial (hem15) (Schizosaccharomyces pombe (strain 972 / ATCC 24843) (Fission yeast)).